The sequence spans 309 residues: MGNAWSLISQMFPPKPKWSVNDIPDLTGKVVIVTGGNTGCGKETVKALLAHGAKVYLAARSEEKAKEAITKLKEETGAEAIFLSLDLADLVSVRRGAEEFLSKEKQLHILFNNAGVMLAPMDMLTKQGYDLQFGTNVIGHFHFTQLLLPALLAAATPTEKARVITTSSSANYMGTLDFNVWKDSPARSKKASGDLYVQSKHGNVVFAVELARRYGEQNIISHSLNPGSIRTDLQRHLSPFANKMQDVFLFPADMGALTQLWAGTSPEAGKLNGEFMIPWARLGKARKETGDPAVGKKLWEWLELQCKDY.

NADP(+) contacts are provided by K64, D86, and N113. The active-site Proton donor is S167. NADP(+)-binding residues include Y196 and K200. Catalysis depends on Y196, which acts as the Proton acceptor. The active-site Lowers pKa of active site Tyr is the K200.

Belongs to the short-chain dehydrogenases/reductases (SDR) family.

Its pathway is secondary metabolite biosynthesis. Its function is as follows. Short-chain dehydrogenase/reductase, part of the gene cluster that mediates the biosynthesis of melleolides, a range of antifungal and phytotoxic polyketide derivatives composed of an orsellinic acid (OA) moiety esterified to various sesquiterpene alcohols. The first step in melleolides biosynthesis is performed by the delta(6)-protoilludene synthase PRO1 which catalyzes the cyclization of farnesyl diphosphate to protoilludene. The orsellinic acid synthase armB produces OA by condensing acetyl-CoA with 3 malonyl-CoA units in a three-round chain elongation reaction folowed by a C2-C7 ring closure. ArmB further catalyzes the trans-esterification of OA to the various sesquiterpene alcohols resulting from the hydroxylation of protoilludene. The melleolides cluster also includes 5 cytochrome P450 monooxygenases, 4 NAD(+)-dependent oxidoreductases, one flavin-dependent oxidoreductase, and one O-methyltransferase. The cytochrome P450 monooxygenases may be involved in protoilludene hydroxylation to elaborate melleolides with multiple alcohol groups, such as melleolide D, which carries alcohol functionalities at C-4, C-5, C-10, and C-13. The role of the NAD(+)-dependent enzymes remains unknown. Numerous melleolides, including arnamial, show 5'-O-methylation of the aromatic moiety which may be catalyzed by the methyltransferase encoded in the cluster. The flavin-dependent oxidoreductase might represent the dehydrogenase yielding the aldehyde in position 1 of arnamial and other melleolides. Finally, several halogenase localized outside of the cluster, are able to catalyze the transfer of a single chlorine atom to the melleolide backbone, resulting in a 6'-chloromelleolide product. The polypeptide is Short-chain dehydrogenase/reductase ARMGADRAFT_1018437 (Armillaria gallica (Bulbous honey fungus)).